The following is a 547-amino-acid chain: MFS-type transporter ltbE (547 aa).

Residues 1 to 23 (MEIAAETTGPAGVTTDVTNAEES) form a disordered region. Helical transmembrane passes span 33-53 (QGWA…VLAI), 74-94 (DIGW…PTCG), 104-124 (WVYC…AVAP), 135-155 (ISGL…SYCV), 165-185 (PIVL…GGSI), 195-215 (FIFW…WFTL), 240-260 (ATLL…GGIV), 267-287 (KVFG…CLQW), 310-330 (GFMM…PIYF), 343-363 (INLL…GSLA), 370-390 (VPFM…YQLV), 399-419 (WIGF…MPIL), and 432-452 (TGLV…PSVG). Residue N463 is glycosylated (N-linked (GlcNAc...) asparagine). The chain crosses the membrane as a helical span at residues 506–526 (VFWVGVATPALAWIASWAMEW).

The protein belongs to the major facilitator superfamily. TCR/Tet family.

The protein resides in the cell membrane. Its function is as follows. MFS-type transporter; part of the gene cluster that mediates the biosynthesis of luteodienoside A, a glycosylated polyketide consisting of an unusual 1-O-beta-D-glucopyranosyl-myo-inositol (glucinol) ester of 3-hydroxy-2,2,4-trimethylocta-4,6-dienoic acid. LtbE is probably involved in the secretion of luteodienoside A. In Aspergillus luteorubrus, this protein is MFS-type transporter ltbE.